Reading from the N-terminus, the 686-residue chain is Bromodomain-containing factor 1 (686 aa).

2 disordered regions span residues 1-69 and 85-150; these read MTDI…PAGL and NGYN…NPIP. The segment covering 9–25 has biased composition (low complexity); the sequence is NDVDVNGNNVNDDVSSN. Residues 99–120 are compositionally biased toward basic and acidic residues; that stretch reads QGLKKEEGGQGTKQEDLDENSK. Residues 130–139 are compositionally biased toward pro residues; it reads EPAPAPPPEP. Residues 145 to 254 enclose the Bromo 1 domain; that stretch reads PQNPIPKHQQ…ASFEKHMLNM (110 aa). Ser270 carries the phosphoserine modification. Residues 283–304 are disordered; it reads QTHNGRPKRTIHPPKSKDIYPY. Basic residues predominate over residues 287-296; sequence GRPKRTIHPP. In terms of domain architecture, Bromo 2 spans 312–421; it reads KRLQQAMKFC…EVFNSKWADR (110 aa). Disordered regions lie at residues 424 to 447, 486 to 523, 594 to 636, and 649 to 686; these read LDDY…SEYS, IRKE…KKNK, SSGA…EQSR, and DSAS…SEEE. Ser429 is subject to Phosphoserine. A compositionally biased stretch (acidic residues) spans 438 to 447; sequence DYDDYESEYS. Residues 460-499 adopt a coiled-coil conformation; it reads AIQYLEEQLARMKVELQQLKKQELEKIRKERRLARGSKKR. The span at 488–507 shows a compositional bias: basic residues; it reads KERRLARGSKKRGKRSKGRS. The NET domain maps to 518-598; that stretch reads RDKKNKLKTV…RQYESSSGAS (81 aa). Polar residues-rich tracts occupy residues 594–620 and 652–671; these read SSGA…TSAG and SPLS…HNGF. Phosphoserine occurs at positions 615 and 659. Positions 675–686 are enriched in acidic residues; that stretch reads SDDDVSSESEEE.

Belongs to the BET family. Interacts with the TFIID subunit TAF7 and with acetylated histones H3 and H4. In terms of processing, phosphorylated by the casein kinase CK2 complex.

It is found in the nucleus. Its function is as follows. Transcription factor involved in the expression of a broad class of genes including snRNAs. Required for sporulation and DNA-damage repair. Prevents the spreading of SIR silencing at telomeres and protects histone H4, but not H3, from deacetylation. The chain is Bromodomain-containing factor 1 (BDF1) from Saccharomyces cerevisiae (strain ATCC 204508 / S288c) (Baker's yeast).